Here is a 459-residue protein sequence, read N- to C-terminus: MTAEETKAAESGAQSAPLRLEGVDISPKQDEGVLKVIKREGTGTETPMIGDRVFVHYTGWLLDGTKFDSSLDRKDRFSFDLGKGEVIKAWDIAVATMKVGEVCHITCKPEYAYGLAGSPPKIPPNATLVFEVELFEFKGEDLTEEEDGGIIRRIRTRGEGYAKPNEGALVEVALEGYFKDQVFDRRELRFEVGEGESMDLPCGLEKAIQRMEKGEHSIVYLKPRYAFGSAGKEKFQIPPNAELKYEIHLKSFEKAKESWEMSSEEKLEQSTIVKERGTVYFKEGKYKQAVLQYKKIVSWLEYESSFSDEDAEKAQALRLASHLNLAMCHLKLQAFSAAIENCNKALELDSNNEKGLFRRGEAHLAVNDFDLARADFQKVLQLYPSNKAAKAQLVVCQQRIRKQLEKEKKLYANMFERLAEEETKAKATVAAGDQPADAEMRDEPKNDVAGGQPQVEAEA.

Methionine 1 is modified (N-acetylmethionine; in peptidyl-prolyl cis-trans isomerase FKBP4; alternate). The interval 1-22 is disordered; the sequence is MTAEETKAAESGAQSAPLRLEG. Position 2 is an N-acetylthreonine; in peptidyl-prolyl cis-trans isomerase FKBP4, N-terminally processed; partial (threonine 2). The PPIase FKBP-type 1 domain occupies 50–138; the sequence is GDRVFVHYTG…VFEVELFEFK (89 aa). Residue threonine 143 is modified to Phosphothreonine. The PPIase FKBP-type 2 domain maps to 167–253; that stretch reads GALVEVALEG…KYEIHLKSFE (87 aa). The residue at position 220 (tyrosine 220) is a Phosphotyrosine. The tract at residues 267–400 is interaction with tubulin; that stretch reads LEQSTIVKER…AQLVVCQQRI (134 aa). TPR repeat units follow at residues 270-303, 319-352, and 354-386; these read STIV…LEYE, LASH…DSNN, and KGLF…YPSN. Lysine 282 carries the N6-acetyllysine modification. Arginine 373 is subject to Omega-N-methylarginine. The disordered stretch occupies residues 423–459; sequence TKAKATVAAGDQPADAEMRDEPKNDVAGGQPQVEAEA.

As to quaternary structure, homodimer. Interacts with GLMN. Associates with HSP90AA1 and HSP70 in steroid hormone receptor complexes. Also interacts with peroxisomal phytanoyl-CoA alpha-hydroxylase (PHYH). Interacts with NR3C1 and dynein. Interacts with HSF1 in the HSP90 complex. Associates with tubulin. Interacts with MAPT/TAU. Interacts (via TPR domain) with S100A1, S100A2 and S100A6; the interaction is Ca(2+) dependent. Interaction with S100A1 and S100A2 (but not with S100A6) leads to inhibition of FKBP4-HSP90 interaction. Interacts with dynein; causes partially NR3C1 transport to the nucleus.

The protein resides in the cytoplasm. It localises to the cytosol. Its subcellular location is the mitochondrion. It is found in the nucleus. The protein localises to the cytoskeleton. It carries out the reaction [protein]-peptidylproline (omega=180) = [protein]-peptidylproline (omega=0). Inhibited by FK506. Immunophilin protein with PPIase and co-chaperone activities. Component of unligated steroid receptors heterocomplexes through interaction with heat-shock protein 90 (HSP90). May play a role in the intracellular trafficking of heterooligomeric forms of steroid hormone receptors between cytoplasm and nuclear compartments. The isomerase activity controls neuronal growth cones via regulation of TRPC1 channel opening. Also acts as a regulator of microtubule dynamics by inhibiting MAPT/TAU ability to promote microtubule assembly. May have a protective role against oxidative stress in mitochondria. This is Peptidyl-prolyl cis-trans isomerase FKBP4 (FKBP4) from Bos taurus (Bovine).